Reading from the N-terminus, the 289-residue chain is Energy-coupling factor transporter ATP-binding protein EcfA2 (289 aa).

The ABC transporter domain occupies 3-246 (IRFKQVDFTY…TQWLKEKQLG (244 aa)). 40–47 (GHTGSGKS) contacts ATP.

It belongs to the ABC transporter superfamily. Energy-coupling factor EcfA family. Forms a stable energy-coupling factor (ECF) transporter complex composed of 2 membrane-embedded substrate-binding proteins (S component), 2 ATP-binding proteins (A component) and 2 transmembrane proteins (T component).

It localises to the cell membrane. ATP-binding (A) component of a common energy-coupling factor (ECF) ABC-transporter complex. Unlike classic ABC transporters this ECF transporter provides the energy necessary to transport a number of different substrates. This is Energy-coupling factor transporter ATP-binding protein EcfA2 from Enterococcus faecalis (strain ATCC 700802 / V583).